Here is a 588-residue protein sequence, read N- to C-terminus: Aspartate--tRNA ligase (588 aa).

An L-aspartate-binding site is contributed by Glu174. The interval 198–201 (QLFK) is aspartate. Arg220 serves as a coordination point for L-aspartate. Residues 220-222 (RDE) and Gln229 each bind ATP. Residue His448 coordinates L-aspartate. Residue Glu482 participates in ATP binding. L-aspartate is bound at residue Arg489. 534 to 537 (GIDR) contributes to the ATP binding site.

Belongs to the class-II aminoacyl-tRNA synthetase family. Type 1 subfamily. In terms of assembly, homodimer.

It is found in the cytoplasm. The catalysed reaction is tRNA(Asp) + L-aspartate + ATP = L-aspartyl-tRNA(Asp) + AMP + diphosphate. Functionally, catalyzes the attachment of L-aspartate to tRNA(Asp) in a two-step reaction: L-aspartate is first activated by ATP to form Asp-AMP and then transferred to the acceptor end of tRNA(Asp). The protein is Aspartate--tRNA ligase of Xanthomonas euvesicatoria pv. vesicatoria (strain 85-10) (Xanthomonas campestris pv. vesicatoria).